A 468-amino-acid chain; its full sequence is Dimethylamine methyltransferase MtbB1 (468 aa).

Position 356 (pyrrolysine 356) is a non-standard amino acid, pyrrolysine.

The protein belongs to the dimethylamine methyltransferase family.

It carries out the reaction Co(I)-[dimethylamine-specific corrinoid protein] + dimethylamine + H(+) = methyl-Co(III)-[dimethylamine-specific corrinoid protein] + methylamine. It participates in one-carbon metabolism; methanogenesis from dimethylamine. Catalyzes the transfer of a methyl group from dimethylamine to the corrinoid cofactor of MtbC. The chain is Dimethylamine methyltransferase MtbB1 (mtbB1) from Methanosarcina mazei (strain ATCC BAA-159 / DSM 3647 / Goe1 / Go1 / JCM 11833 / OCM 88) (Methanosarcina frisia).